The chain runs to 280 residues: P32 adhesin (280 aa).

2 helical membrane passes run 13 to 37 and 68 to 92; these read FIVL…ALVV and WFIP…AIGL. The span at 114–128 shows a compositional bias: polar residues; that stretch reads EQLQRISDQQEQQTV. Disordered stretches follow at residues 114–149 and 163–280; these read EQLQ…QPLQ and FNPN…GLKP. Composition is skewed to low complexity over residues 132 to 149 and 168 to 188; these read PQQS…QPLQ and QQRP…NFNP. 13 repeat units span residues 163–168, 170–174, 186–190, 191–195, 196–200, 199–204, 206–210, 222–226, 227–231, 232–236, 249–254, 256–260, and 259–264. The segment at 163–264 is 6 X 5 AA repeats of [FM]-N-P-N-M-Q; sequence FNPNMQQRPG…QRPGFNPNMQ (102 aa). Residues 170-260 are 5 X 5 AA repeats of R-P-G-F-N; that stretch reads RPGFNQPNQQ…PNMQQRPGFN (91 aa). The interval 186 to 226 is 2 X 5 AA repeats of F-N-P-R-M; it reads FNPRMNPNMQRPGFNPNMQQRPGFNQPNQQFQPHNNFNPRM. Residues 204–224 show a composition bias toward low complexity; it reads QQRPGFNQPNQQFQPHNNFNP. Residues 235-257 show a composition bias toward low complexity; it reads FNQPHPNQFAQPNNFNPNMQQRP. Residues 261–271 show a composition bias toward polar residues; it reads PNMQQRPNPSQ.

Its subcellular location is the cell projection. The protein localises to the attachment organelle membrane. In terms of biological role, adhesin necessary for successful cytadherence and virulence. The chain is P32 adhesin from Mycoplasma genitalium (strain ATCC 33530 / DSM 19775 / NCTC 10195 / G37) (Mycoplasmoides genitalium).